The primary structure comprises 181 residues: NAD(P)H-quinone oxidoreductase subunit I, chloroplastic (181 aa).

2 4Fe-4S ferredoxin-type domains span residues Gly-55–Glu-84 and Lys-95–Glu-124. [4Fe-4S] cluster contacts are provided by Cys-64, Cys-67, Cys-70, Cys-74, Cys-104, Cys-107, Cys-110, and Cys-114.

The protein belongs to the complex I 23 kDa subunit family. In terms of assembly, NDH is composed of at least 16 different subunits, 5 of which are encoded in the nucleus. [4Fe-4S] cluster serves as cofactor.

It is found in the plastid. It localises to the chloroplast thylakoid membrane. The catalysed reaction is a plastoquinone + NADH + (n+1) H(+)(in) = a plastoquinol + NAD(+) + n H(+)(out). The enzyme catalyses a plastoquinone + NADPH + (n+1) H(+)(in) = a plastoquinol + NADP(+) + n H(+)(out). Its function is as follows. NDH shuttles electrons from NAD(P)H:plastoquinone, via FMN and iron-sulfur (Fe-S) centers, to quinones in the photosynthetic chain and possibly in a chloroplast respiratory chain. The immediate electron acceptor for the enzyme in this species is believed to be plastoquinone. Couples the redox reaction to proton translocation, and thus conserves the redox energy in a proton gradient. This is NAD(P)H-quinone oxidoreductase subunit I, chloroplastic from Physcomitrium patens (Spreading-leaved earth moss).